The sequence spans 321 residues: Glucokinase (321 aa).

8–13 (GDVGGT) contacts ATP.

This sequence belongs to the bacterial glucokinase family.

Its subcellular location is the cytoplasm. It carries out the reaction D-glucose + ATP = D-glucose 6-phosphate + ADP + H(+). The protein is Glucokinase of Shigella boydii serotype 18 (strain CDC 3083-94 / BS512).